The sequence spans 239 residues: Orotidine 5'-phosphate decarboxylase (239 aa).

Residues Asp15, Lys36, 63-72 (DLKFHDIPNT), Thr127, Arg189, Gln198, Gly218, and Arg219 contribute to the substrate site. Residue Lys65 is the Proton donor of the active site.

The protein belongs to the OMP decarboxylase family. Type 1 subfamily. In terms of assembly, homodimer.

The catalysed reaction is orotidine 5'-phosphate + H(+) = UMP + CO2. It functions in the pathway pyrimidine metabolism; UMP biosynthesis via de novo pathway; UMP from orotate: step 2/2. In terms of biological role, catalyzes the decarboxylation of orotidine 5'-monophosphate (OMP) to uridine 5'-monophosphate (UMP). The polypeptide is Orotidine 5'-phosphate decarboxylase (Prochlorococcus marinus (strain MIT 9515)).